The sequence spans 360 residues: Photosystem II protein D1 2 (360 aa).

3 consecutive transmembrane segments (helical) span residues 29–46 (YIGW…AATI), 118–133 (HFLI…EWEL), and 142–156 (WIPV…AATA). Residue histidine 118 participates in chlorophyll a binding. Tyrosine 126 is a binding site for pheophytin a. Residues aspartate 170 and glutamate 189 each contribute to the [CaMn4O5] cluster site. The chain crosses the membrane as a helical span at residues 197-218 (FHMLGVAGVFGGALFAAMHGSL). Histidine 198 serves as a coordination point for chlorophyll a. A quinone-binding positions include histidine 215 and 264–265 (SF). Fe cation is bound at residue histidine 215. A Fe cation-binding site is contributed by histidine 272. Residues 274-288 (FLAAWPVVGIWFAAL) traverse the membrane as a helical segment. Residues histidine 332, glutamate 333, aspartate 342, and alanine 344 each contribute to the [CaMn4O5] cluster site. The propeptide occupies 345–360 (SGELAPVAMIAPSIEA).

This sequence belongs to the reaction center PufL/M/PsbA/D family. PSII is composed of 1 copy each of membrane proteins PsbA, PsbB, PsbC, PsbD, PsbE, PsbF, PsbH, PsbI, PsbJ, PsbK, PsbL, PsbM, PsbT, PsbX, PsbY, PsbZ, Psb30/Ycf12, peripheral proteins PsbO, CyanoQ (PsbQ), PsbU, PsbV and a large number of cofactors. It forms dimeric complexes. The D1/D2 heterodimer binds P680, chlorophylls that are the primary electron donor of PSII, and subsequent electron acceptors. It shares a non-heme iron and each subunit binds pheophytin, quinone, additional chlorophylls, carotenoids and lipids. D1 provides most of the ligands for the Mn4-Ca-O5 cluster of the oxygen-evolving complex (OEC). There is also a Cl(-1) ion associated with D1 and D2, which is required for oxygen evolution. The PSII complex binds additional chlorophylls, carotenoids and specific lipids. is required as a cofactor. Post-translationally, tyr-161 forms a radical intermediate that is referred to as redox-active TyrZ, YZ or Y-Z. In terms of processing, C-terminally processed by CtpA; processing is essential to allow assembly of the oxygen-evolving complex and thus photosynthetic growth.

The protein resides in the cellular thylakoid membrane. It carries out the reaction 2 a plastoquinone + 4 hnu + 2 H2O = 2 a plastoquinol + O2. Its function is as follows. Photosystem II (PSII) is a light-driven water:plastoquinone oxidoreductase that uses light energy to abstract electrons from H(2)O, generating O(2) and a proton gradient subsequently used for ATP formation. It consists of a core antenna complex that captures photons, and an electron transfer chain that converts photonic excitation into a charge separation. The D1/D2 (PsbA/PsbD) reaction center heterodimer binds P680, the primary electron donor of PSII as well as several subsequent electron acceptors. This chain is Photosystem II protein D1 2, found in Synechococcus elongatus.